Reading from the N-terminus, the 114-residue chain is Large ribosomal subunit protein bL20 (114 aa).

It belongs to the bacterial ribosomal protein bL20 family.

Its function is as follows. Binds directly to 23S ribosomal RNA and is necessary for the in vitro assembly process of the 50S ribosomal subunit. It is not involved in the protein synthesizing functions of that subunit. In Anaeromyxobacter dehalogenans (strain 2CP-C), this protein is Large ribosomal subunit protein bL20.